A 185-amino-acid polypeptide reads, in one-letter code: Ribosome-recycling factor (185 aa).

It belongs to the RRF family.

The protein resides in the cytoplasm. In terms of biological role, responsible for the release of ribosomes from messenger RNA at the termination of protein biosynthesis. May increase the efficiency of translation by recycling ribosomes from one round of translation to another. This chain is Ribosome-recycling factor, found in Chloroflexus aurantiacus (strain ATCC 29364 / DSM 637 / Y-400-fl).